We begin with the raw amino-acid sequence, 99 residues long: DNA-directed RNA polymerase subunit omega (99 aa).

It belongs to the RNA polymerase subunit omega family. As to quaternary structure, the RNAP catalytic core consists of 2 alpha, 1 beta, 1 beta' and 1 omega subunit. When a sigma factor is associated with the core the holoenzyme is formed, which can initiate transcription.

The enzyme catalyses RNA(n) + a ribonucleoside 5'-triphosphate = RNA(n+1) + diphosphate. Promotes RNA polymerase assembly. Latches the N- and C-terminal regions of the beta' subunit thereby facilitating its interaction with the beta and alpha subunits. This Stenotrophomonas maltophilia (strain K279a) protein is DNA-directed RNA polymerase subunit omega.